The following is a 982-amino-acid chain: Little elongation complex subunit 2 (982 aa).

Residues Ser-17 and Ser-326 each carry the phosphoserine modification. A compositionally biased stretch (polar residues) spans Thr-410 to Asn-427. Disordered regions lie at residues Thr-410 to Ser-450 and Gly-473 to Gln-504. The span at Glu-479 to Asn-497 shows a compositional bias: basic and acidic residues. Ser-571 carries the post-translational modification Phosphoserine. Residue Thr-573 is modified to Phosphothreonine. Disordered regions lie at residues Val-595 to Cys-623, Glu-672 to Trp-697, and Pro-930 to Thr-982. Positions Ser-597 to Ser-610 are enriched in low complexity. Composition is skewed to polar residues over residues Gly-611–Cys-623 and Glu-672–Leu-683. Positions Ser-684–Trp-697 are enriched in low complexity. Polar residues predominate over residues Ser-956 to Glu-970.

The protein belongs to the ICE2 family. Component of the little elongation complex (LEC), at least composed of ELL (ELL, ELL2 or ELL3), ZC3H8, ICE1 and ICE2. Interacts with ICE1 (via C-terminus domain). Interacts with ELL. Expressed at low levels in lung and testis.

It is found in the nucleus. Component of the little elongation complex (LEC), a complex required to regulate small nuclear RNA (snRNA) gene transcription by RNA polymerase II and III. The chain is Little elongation complex subunit 2 (ICE2) from Homo sapiens (Human).